The following is a 710-amino-acid chain: Lactoperoxidase (710 aa).

Residues 1–23 form the signal peptide; that stretch reads MKVLLHLPALLASLTLLQTAASA. Residues 24–80 constitute a propeptide that is removed on maturation; that stretch reads SDDPTAETDIIHDTVEEVKVWVNKAFLDSRDRLKMAMTTKIHSTRHLSDYLKHAKGR. An intrachain disulfide couples Cys130 to Cys143. Asp223 contributes to the heme b binding site. Residue His224 is the Proton acceptor of the active site. Residue Asp225 participates in Ca(2+) binding. Disulfide bonds link Cys244–Cys254 and Cys248–Cys272. Ca(2+) contacts are provided by Thr299, Phe301, Asp303, and Ser305. Residue Ser313 is modified to Phosphoserine. Cys352 and Cys363 form a disulfide bridge. Heme b-binding residues include Glu373 and His466. 3'-nitrotyrosine is present on Tyr480. 2 disulfide bridges follow: Cys571-Cys628 and Cys669-Cys694.

Belongs to the peroxidase family. It depends on Ca(2+) as a cofactor. Heme b serves as cofactor. In terms of tissue distribution, expressed in the colon, including colonocytes and mucin-containing goblet cells. Not detected in the ileum.

Its subcellular location is the secreted. It localises to the cytoplasm. It catalyses the reaction 2 a phenolic donor + H2O2 = 2 a phenolic radical donor + 2 H2O. It carries out the reaction thiocyanate + H2O2 + H(+) = hypothiocyanous acid + H2O. The catalysed reaction is iodide + H2O2 = hypoiodite + H2O. In terms of biological role, heme-containing oxidoreductase which catalyzes the conversion of thiocyanate (SCN(-)) into antimicrobial agent hypothiocyanous acid (OSCN(-)) in the presence of hydrogen peroxide (H2O2). Also involved in the conversion of iodide (I(-)) into hypoiodite (IO(-)) in the presence of H2O2. Responsible for the inactivation of a wide range of micro-organisms and hence, important component of defense mechanism. May be implicated in airway host defense against infection. May contribute to maintaining an appropriate H2O2 cellular level, therefore protecting cells from H2O2-caused injuries and inflammation. In Mus musculus (Mouse), this protein is Lactoperoxidase.